A 221-amino-acid chain; its full sequence is Protein-disulfide oxidoreductase DsbI (221 aa).

The chain crosses the membrane as a helical span at residues 27–47 (FLWLLMAVAMGGLIILAHSFF). A disulfide bridge links C56 with C59. Helical transmembrane passes span 64 to 84 (FAMF…KNII) and 85 to 105 (LKLI…KFSV). Cysteines 128 and 154 form a disulfide. A helical transmembrane segment spans residues 189–209 (LAFYEYGAGVPAGVWAMFCTV).

It belongs to the DsbB family. DsbI subfamily. In terms of assembly, interacts with DsbL.

The protein localises to the cell inner membrane. Functionally, required for disulfide bond formation in some proteins. Part of a redox system composed of DsbI and DsbL that mediates formation of an essential disulfide bond in AssT. This is Protein-disulfide oxidoreductase DsbI from Lelliottia amnigena (Enterobacter amnigenus).